A 405-amino-acid polypeptide reads, in one-letter code: S-adenosylmethionine synthase (405 aa).

141–146 (GQGSVD) contributes to the ATP binding site.

The protein belongs to the AdoMet synthase 2 family. Mg(2+) is required as a cofactor.

It catalyses the reaction L-methionine + ATP + H2O = S-adenosyl-L-methionine + phosphate + diphosphate. It functions in the pathway amino-acid biosynthesis; S-adenosyl-L-methionine biosynthesis; S-adenosyl-L-methionine from L-methionine: step 1/1. Catalyzes the formation of S-adenosylmethionine from methionine and ATP. The protein is S-adenosylmethionine synthase of Methanococcus maripaludis (strain C6 / ATCC BAA-1332).